The sequence spans 303 residues: Dihydroorotate dehydrogenase B (NAD(+)), catalytic subunit (303 aa).

Residues serine 21 and 45–46 (KG) contribute to the FMN site. Residues lysine 45 and 69–73 (NCIGL) contribute to the substrate site. Residues asparagine 98 and asparagine 126 each coordinate FMN. A substrate-binding site is contributed by asparagine 126. Cysteine 129 serves as the catalytic Nucleophile. FMN is bound by residues lysine 165 and valine 191. 192 to 193 (NT) provides a ligand contact to substrate. Residues glycine 217 and 243–244 (GG) contribute to the FMN site.

Belongs to the dihydroorotate dehydrogenase family. Type 1 subfamily. As to quaternary structure, heterotetramer of 2 PyrK and 2 PyrD type B subunits. It depends on FMN as a cofactor.

The protein resides in the cytoplasm. The enzyme catalyses (S)-dihydroorotate + NAD(+) = orotate + NADH + H(+). It participates in pyrimidine metabolism; UMP biosynthesis via de novo pathway; orotate from (S)-dihydroorotate (NAD(+) route): step 1/1. Its function is as follows. Catalyzes the conversion of dihydroorotate to orotate with NAD(+) as electron acceptor. This chain is Dihydroorotate dehydrogenase B (NAD(+)), catalytic subunit (pyrD), found in Brachyspira hyodysenteriae (strain ATCC 49526 / WA1).